The following is a 520-amino-acid chain: Nucleolar protein 12 (520 aa).

2 disordered regions span residues 1 to 29 and 41 to 185; these read MGKK…NVSV and AGPV…DDDE. Residues 78–95 show a composition bias toward acidic residues; that stretch reads ASEDQFMEDAPESPDAAE. Positions 120 to 132 are enriched in basic and acidic residues; it reads SYMRRLAKEEQKE. Over residues 144-168 the composition is skewed to acidic residues; that stretch reads LEEESEDGEKESPQSEDGESEDEGA. 2 consecutive RRM domains span residues 191–303 and 311–421; these read RTVF…NVAH and RCVF…RAKK. The tract at residues 472–520 is disordered; it reads EGNRATADGSSRIRVRTKSRGSKAKKDSRSKKRAAAYKAAGGKKAKIGK. Positions 484–520 are enriched in basic residues; the sequence is IRVRTKSRGSKAKKDSRSKKRAAAYKAAGGKKAKIGK.

It belongs to the RRM RBM34 family.

It localises to the nucleus. The protein resides in the nucleolus. Involved in pre-25S rRNA processing. The protein is Nucleolar protein 12 (nop12) of Emericella nidulans (strain FGSC A4 / ATCC 38163 / CBS 112.46 / NRRL 194 / M139) (Aspergillus nidulans).